The following is a 328-amino-acid chain: Deoxynucleotidyltransferase terminal-interacting protein 1 (328 aa).

Disordered stretches follow at residues 1–30 (MGATGDTEQPRGPGGAERGGLELGDAGAAG) and 142–176 (ELPGIKRGRQAEEESHRGSPIPKKRKGRPPGHVLS). The span at 12–22 (GPGGAERGGLE) shows a compositional bias: gly residues. Residues 56 to 147 (MTTSFTDPAI…RLAHELPGIK (92 aa)) are important for dimerization. The span at 142 to 158 (ELPGIKRGRQAEEESHR) shows a compositional bias: basic and acidic residues. Residues 158 to 172 (RGSPIPKKRKGRPPG) constitute a DNA-binding region (a.T hook). A Phosphoserine modification is found at S160. The short motif at 163-169 (PKKRKGR) is the Nuclear localization signal element. Positions 196-315 (REGPKWDPAR…MRKYMETLRT (120 aa)) are important for DNA and nucleosome binding. Positions 215-236 (GSRANKALGMGGTRGRIYIKHP) form a DNA-binding region, H-T-H motif.

In terms of assembly, monomer and homodimer. A minor proportion may form homotrimers. Interacts with ZNF541. Interacts with the terminal deoxynucleotidyltransferase DNTT. Interacts with TRERF1. Identified in a histone deacetylase complex that contains DNTTIP1, HDAC1 and MIDEAS; this complex assembles into a tetramer that contains four copies of each protein chain. Component of a histone deacetylase complex containing DNTTIP1, ZNF541, HDAC1 and HDAC2. Identified in a complex with KCTD19, HDAC1, HDAC2 and ZNF541.

It localises to the nucleus. Its function is as follows. Increases DNTT terminal deoxynucleotidyltransferase activity (in vitro). Also acts as a transcriptional regulator, binding to the consensus sequence 5'-GNTGCATG-3' following an AT-tract. Associates with RAB20 promoter and positively regulates its transcription. Binds DNA and nucleosomes; may recruit HDAC1 complexes to nucleosomes or naked DNA. The sequence is that of Deoxynucleotidyltransferase terminal-interacting protein 1 (Dnttip1) from Mus musculus (Mouse).